Consider the following 102-residue polypeptide: Aspartyl/glutamyl-tRNA(Asn/Gln) amidotransferase subunit C (102 aa).

This sequence belongs to the GatC family. As to quaternary structure, heterotrimer of A, B and C subunits.

It carries out the reaction L-glutamyl-tRNA(Gln) + L-glutamine + ATP + H2O = L-glutaminyl-tRNA(Gln) + L-glutamate + ADP + phosphate + H(+). The catalysed reaction is L-aspartyl-tRNA(Asn) + L-glutamine + ATP + H2O = L-asparaginyl-tRNA(Asn) + L-glutamate + ADP + phosphate + 2 H(+). Its function is as follows. Allows the formation of correctly charged Asn-tRNA(Asn) or Gln-tRNA(Gln) through the transamidation of misacylated Asp-tRNA(Asn) or Glu-tRNA(Gln) in organisms which lack either or both of asparaginyl-tRNA or glutaminyl-tRNA synthetases. The reaction takes place in the presence of glutamine and ATP through an activated phospho-Asp-tRNA(Asn) or phospho-Glu-tRNA(Gln). The polypeptide is Aspartyl/glutamyl-tRNA(Asn/Gln) amidotransferase subunit C (Bordetella parapertussis (strain 12822 / ATCC BAA-587 / NCTC 13253)).